A 178-amino-acid polypeptide reads, in one-letter code: Ribulose bisphosphate carboxylase small subunit, chloroplastic (178 aa).

Residues 1-54 (MASSMISSPAVTTVNRAGAGTVAPFTGLKSMAGFPTRKTNNDIASIASNGGRVQ) constitute a chloroplast transit peptide.

It belongs to the RuBisCO small chain family. Heterohexadecamer of 8 large and 8 small subunits.

Its subcellular location is the plastid. The protein resides in the chloroplast. RuBisCO catalyzes two reactions: the carboxylation of D-ribulose 1,5-bisphosphate, the primary event in carbon dioxide fixation, as well as the oxidative fragmentation of the pentose substrate. Both reactions occur simultaneously and in competition at the same active site. Although the small subunit is not catalytic it is essential for maximal activity. The chain is Ribulose bisphosphate carboxylase small subunit, chloroplastic from Glycine tomentella (Woolly glycine).